A 296-amino-acid chain; its full sequence is Protein RarD (296 aa).

Residues 1-11 lie on the Cytoplasmic side of the membrane; that stretch reads MDAKQTRQGVL. A helical transmembrane segment spans residues 12–34; that stretch reads LALAAYFIWGIAPAYFKLIYYVP. In terms of domain architecture, EamA spans 18–145; that stretch reads FIWGIAPAYF…AICGVLVQLW (128 aa). Residues 35-37 lie on the Periplasmic side of the membrane; the sequence is ADE. A helical transmembrane segment spans residues 38–60; that stretch reads ILTHRVIWSFFFMVVLMSICRQW. Residues 61–72 lie on the Cytoplasmic side of the membrane; the sequence is SYLKTLIQTPQK. The helical transmembrane segment at 73–95 threads the bilayer; the sequence is IFMLAVSAVLIGGNWLLFIWAVN. Residues 96–99 are Periplasmic-facing; sequence NHHM. The helical transmembrane segment at 100 to 122 threads the bilayer; that stretch reads LEASLGYFINPLVNIVLGMIFLG. Residues 123–128 lie on the Cytoplasmic side of the membrane; the sequence is ERFRRM. Residues 129–146 form a helical membrane-spanning segment; the sequence is QWLAVILAICGVLVQLWT. Topologically, residues 147–149 are periplasmic; sequence FGS. A helical transmembrane segment spans residues 150-167; that stretch reads LPIIALGLAFSFAFYGLV. At 168–179 the chain is on the cytoplasmic side; that stretch reads RKKIAVEAQTGM. Residues 180 to 197 form a helical membrane-spanning segment; that stretch reads LIETMWLLPVAAIYLFAI. The Periplasmic portion of the chain corresponds to 198–211; that stretch reads ADSSTSHMGQNPMS. A helical transmembrane segment spans residues 212-234; the sequence is LNLLLIAAGIVTTVPLLCFTAAA. The Cytoplasmic segment spans residues 235-238; the sequence is TRLR. The helical transmembrane segment at 239–261 threads the bilayer; sequence LSTLGFFQYIGPTLMFLLAVTFY. The Periplasmic portion of the chain corresponds to 262–270; the sequence is GEKPGADKM. The helical transmembrane segment at 271–290 threads the bilayer; the sequence is VTFAFIWVALAIFVMDAIYT. The Cytoplasmic portion of the chain corresponds to 291–296; it reads QRRTSK.

This sequence belongs to the EamA transporter family.

It is found in the cell inner membrane. The polypeptide is Protein RarD (rarD) (Escherichia coli (strain K12)).